Consider the following 380-residue polypeptide: Cytochrome b (380 aa).

4 helical membrane passes run 34–54 (FGSLLGICLLTQILTGLLLAM), 78–99 (WLIRNLHANGASFFFICIYLHI), 114–134 (WNTGVILLLTLMATAFVGYVL), and 179–199 (FFALHFLLPFMIAGLTLIHLT). The heme b site is built by histidine 84 and histidine 98. Residues histidine 183 and histidine 197 each coordinate heme b. Histidine 202 provides a ligand contact to a ubiquinone. 4 consecutive transmembrane segments (helical) span residues 227-247 (LKDILGFMLMLLPLTTLALFS), 289-309 (LGGVLALAASVLVLFLAPFLH), 321-341 (LSQLLFWILVANLFILTWVGS), and 348-368 (FIIIGQLASITYFTILLILFP).

This sequence belongs to the cytochrome b family. As to quaternary structure, the cytochrome bc1 complex contains 11 subunits: 3 respiratory subunits (MT-CYB, CYC1 and UQCRFS1), 2 core proteins (UQCRC1 and UQCRC2) and 6 low-molecular weight proteins (UQCRH/QCR6, UQCRB/QCR7, UQCRQ/QCR8, UQCR10/QCR9, UQCR11/QCR10 and a cleavage product of UQCRFS1). This cytochrome bc1 complex then forms a dimer. Heme b is required as a cofactor.

The protein resides in the mitochondrion inner membrane. Functionally, component of the ubiquinol-cytochrome c reductase complex (complex III or cytochrome b-c1 complex) that is part of the mitochondrial respiratory chain. The b-c1 complex mediates electron transfer from ubiquinol to cytochrome c. Contributes to the generation of a proton gradient across the mitochondrial membrane that is then used for ATP synthesis. In Ardenna tenuirostris (Short-tailed shearwater), this protein is Cytochrome b (MT-CYB).